We begin with the raw amino-acid sequence, 451 residues long: Phosphoglucosamine mutase (451 aa).

Ser104 acts as the Phosphoserine intermediate in catalysis. Mg(2+) is bound by residues Ser104, Asp249, Asp251, and Asp253. The residue at position 104 (Ser104) is a Phosphoserine.

The protein belongs to the phosphohexose mutase family. It depends on Mg(2+) as a cofactor. Activated by phosphorylation.

It carries out the reaction alpha-D-glucosamine 1-phosphate = D-glucosamine 6-phosphate. Its function is as follows. Catalyzes the conversion of glucosamine-6-phosphate to glucosamine-1-phosphate. This chain is Phosphoglucosamine mutase, found in Psychrobacter sp. (strain PRwf-1).